Reading from the N-terminus, the 853-residue chain is MICAL-like protein 1 (853 aa).

A Calponin-homology (CH) domain is found at 2 to 108 (AGPRGALLAW…YVSQYYNHFA (107 aa)). Disordered regions lie at residues 118–162 (PRKG…TPSS) and 224–659 (SGRS…FPLI). Residues 145-162 (ECSSGSLSKQGSHRTPSS) show a composition bias toward polar residues. One can recognise an LIM zinc-binding domain in the interval 162 to 224 (STCAACQQHV…AEHCARLGPS (63 aa)). Phosphoserine occurs at positions 292 and 306. Phosphothreonine is present on residues Thr312 and Thr315. Residues 355–366 (LSERTPAPRKDP) are compositionally biased toward basic and acidic residues. Over residues 381–394 (APLPPSSSPGPPPG) the composition is skewed to pro residues. Ser388 carries the post-translational modification Phosphoserine. The NPF1 signature appears at 419-421 (NPF). Pro residues predominate over residues 429 to 445 (PAAPSPAPGPAPTPPES). Thr457 and Thr459 each carry phosphothreonine. Phosphoserine is present on residues Ser460, Ser461, Ser474, and Ser476. Low complexity-rich tracts occupy residues 495–515 (PSPA…APSE) and 541–553 (SASL…LSSS). Ser568 and Ser611 each carry phosphoserine. The segment covering 607–618 (PGTSSPQLQVKS) has biased composition (polar residues). Positions 623–625 (NPF) match the NPF2 motif. Positions 642 to 853 (KGSKPARPPA…TKSKCPGDRS (212 aa)) are mediates the interaction with RAB13 and RAB35 and intramolecular interaction with the CH domain. The region spanning 661–808 (RKVQSDQYIP…EEEEDKMLEA (148 aa)) is the bMERB domain. Positions 671 to 701 (EEDIHGEIDTIERQLDALEHRGVLLEEKLRG) form a coiled coil. The necessary and sufficient to associate with tubular recycling endosome membranes, mediate phosphatidic acid-binding and membrane tubulation stretch occupies residues 690–853 (HRGVLLEEKL…TKSKCPGDRS (164 aa)). Ser730 bears the Phosphoserine mark. The stretch at 791–820 (CLDEDRQREEEEDKMLEAMIKKKEFQKETE) forms a coiled coil.

Homooligomer. Interacts (via NPF1 motif) with EHD1 (via EH domain); the interaction is direct and probably recruits EHD1 to membranes. Interacts with EHD3 (via EH domain). Interacts with RAB35 (GTP-bound form); the interaction is direct and probably recruits MICALL1 to membranes. Interacts with ACAP2; the interaction is indirect through RAB35. Interacts with RAB8A (GTP-bound form); regulates RAB8A association with recycling endosomes. Interacts with RAB13 (GTP-bound form). Interacts with ARF6 (GTP-bound form). Interacts with PACSIN2 (via the SH3 domain). Interacts with DPYSL2.

Its subcellular location is the recycling endosome membrane. The protein resides in the late endosome membrane. It is found in the cell projection. It localises to the cilium membrane. The protein localises to the cytoplasm. Its subcellular location is the cytoskeleton. The protein resides in the microtubule organizing center. It is found in the centrosome. It localises to the centriole. In terms of biological role, lipid-binding protein with higher affinity for phosphatidic acid, a lipid enriched in recycling endosome membranes. On endosome membranes, acts as a downstream effector of Rab proteins recruiting cytosolic proteins to regulate membrane tubulation. Involved in a late step of receptor-mediated endocytosis regulating for instance endocytosed-EGF receptor trafficking. Alternatively, regulates slow endocytic recycling of endocytosed proteins back to the plasma membrane. Also involved in cargo protein delivery to the plasma membrane. Plays a role in ciliogenesis coordination, recruits EHD1 to primary cilium where it is anchored to the centriole through interaction with tubulins. May indirectly play a role in neurite outgrowth. In Bos taurus (Bovine), this protein is MICAL-like protein 1 (MICALL1).